Reading from the N-terminus, the 605-residue chain is Probable serine/threonine-protein kinase DDB_G0286481 (605 aa).

The helical transmembrane segment at 5–25 threads the bilayer; that stretch reads YQIFFLLYLLCILYVISCGYI. N-linked (GlcNAc...) asparagine glycosylation is present at Asn53. 2 stretches are compositionally biased toward low complexity: residues 54–81 and 89–104; these read SSNNNNNNNNNNNNNNNNNNNNNNNNNN and NCNNNSSNNNSDNKSN. Positions 54–170 are disordered; that stretch reads SSNNNNNNNN…LGGSMGSGSQ (117 aa). Residues Asn92, Asn93, Asn97, and Asn101 are each glycosylated (N-linked (GlcNAc...) asparagine). Basic residues predominate over residues 105-123; the sequence is IKNKQHHHHSNFRNRRGKS. Residue Asn127 is glycosylated (N-linked (GlcNAc...) asparagine). Positions 144-155 are enriched in polar residues; sequence QSSSYDTSELHQ. N-linked (GlcNAc...) asparagine glycosylation is present at Asn280. The region spanning 312–597 is the Protein kinase domain; sequence YEVIQKIGRG…AKEAMKHPYF (286 aa). Residues 318-326 and Lys341 contribute to the ATP site; that span reads IGRGKYSEV. Asn390 is a glycosylation site (N-linked (GlcNAc...) asparagine). The active-site Proton acceptor is the Asp429. Asn601 is a glycosylation site (N-linked (GlcNAc...) asparagine).

Belongs to the protein kinase superfamily. CMGC Ser/Thr protein kinase family.

Its subcellular location is the membrane. It catalyses the reaction L-seryl-[protein] + ATP = O-phospho-L-seryl-[protein] + ADP + H(+). The enzyme catalyses L-threonyl-[protein] + ATP = O-phospho-L-threonyl-[protein] + ADP + H(+). The sequence is that of Probable serine/threonine-protein kinase DDB_G0286481 from Dictyostelium discoideum (Social amoeba).